We begin with the raw amino-acid sequence, 86 residues long: MSQTENAVTSSLSQKRFVRRGKPMTDSEKQMAAVARKRLTHKEIKVFVKNPLKDLMVEYCEREGITQAQFVEKIIKDELQRLDILK.

Over residues 1 to 14 (MSQTENAVTSSLSQ) the composition is skewed to polar residues. The tract at residues 1-31 (MSQTENAVTSSLSQKRFVRRGKPMTDSEKQM) is disordered.

In terms of biological role, this protein is involved in the determination of copy number in gene replication. It binds to the repA promoter thus inhibiting the synthesis of the mRNA for the initiator protein RepA. The sequence is that of Replication regulatory protein repA2 (repA2) from Escherichia coli.